Consider the following 202-residue polypeptide: MDLSPNPDSPPSGGGNGGGGGSSSSNSSPSMGAGAPQSPSRYEAQKRRDWNTFGQYLRNHRPPLSLAQCSGAHVLEFLRYLDQFGKTKVHTAACPFFGHPSPPAPCPCPLRQAWGSLDALVGRLRAAFEENGGRPESNPFAARAVRLYLREVREHQARARGVSYEKKKRKKPQQQQLQGGDSSGLHGHQHHPPPPPPAGAAC.

Disordered regions lie at residues 1 to 44 and 158 to 202; these read MDLS…RYEA and RARG…GAAC. Over residues 12 to 22 the composition is skewed to gly residues; sequence SGGGNGGGGGS. A compositionally biased stretch (low complexity) spans 23–36; it reads SSSNSSPSMGAGAP. One can recognise an ALOG domain in the interval 41 to 168; it reads RYEAQKRRDW…ARGVSYEKKK (128 aa). A Nuclear localization signal motif is present at residues 166–170; the sequence is KKKRK. The span at 173 to 186 shows a compositional bias: low complexity; it reads QQQQLQGGDSSGLH. A compositionally biased stretch (pro residues) spans 192–202; sequence PPPPPPAGAAC.

This sequence belongs to the plant homeotic and developmental regulators ALOG protein family.

The protein resides in the nucleus. Probable transcription regulator that acts as a developmental regulator by promoting cell growth in response to light. The protein is Protein G1-like4 of Oryza sativa subsp. indica (Rice).